A 331-amino-acid polypeptide reads, in one-letter code: Adenosine deaminase (331 aa).

Zn(2+)-binding residues include H12 and H14. Residues H14, D16, and G170 each coordinate substrate. H197 contributes to the Zn(2+) binding site. E200 serves as the catalytic Proton donor. D278 provides a ligand contact to Zn(2+).

It belongs to the metallo-dependent hydrolases superfamily. Adenosine and AMP deaminases family. Adenosine deaminase subfamily. It depends on Zn(2+) as a cofactor.

It catalyses the reaction adenosine + H2O + H(+) = inosine + NH4(+). It carries out the reaction 2'-deoxyadenosine + H2O + H(+) = 2'-deoxyinosine + NH4(+). Catalyzes the hydrolytic deamination of adenosine and 2-deoxyadenosine. The chain is Adenosine deaminase from Shewanella woodyi (strain ATCC 51908 / MS32).